The following is a 153-amino-acid chain: NADPH-dependent 7-cyano-7-deazaguanine reductase (153 aa).

Positions 1–17 (MTDTRNLTQLGSKTQAP) are enriched in polar residues. Positions 1-23 (MTDTRNLTQLGSKTQAPASPEAA) are disordered. C51 functions as the Thioimide intermediate in the catalytic mechanism. D58 (proton donor) is an active-site residue. Substrate contacts are provided by residues 73–75 (VES) and 92–93 (HE).

This sequence belongs to the GTP cyclohydrolase I family. QueF type 1 subfamily.

The protein resides in the cytoplasm. The enzyme catalyses 7-aminomethyl-7-carbaguanine + 2 NADP(+) = 7-cyano-7-deazaguanine + 2 NADPH + 3 H(+). It participates in tRNA modification; tRNA-queuosine biosynthesis. Its function is as follows. Catalyzes the NADPH-dependent reduction of 7-cyano-7-deazaguanine (preQ0) to 7-aminomethyl-7-deazaguanine (preQ1). The chain is NADPH-dependent 7-cyano-7-deazaguanine reductase from Chelativorans sp. (strain BNC1).